The following is a 255-amino-acid chain: Phosphoribosylaminoimidazole-succinocarboxamide synthase A (255 aa).

It belongs to the SAICAR synthetase family.

It carries out the reaction 5-amino-1-(5-phospho-D-ribosyl)imidazole-4-carboxylate + L-aspartate + ATP = (2S)-2-[5-amino-1-(5-phospho-beta-D-ribosyl)imidazole-4-carboxamido]succinate + ADP + phosphate + 2 H(+). Its pathway is purine metabolism; IMP biosynthesis via de novo pathway; 5-amino-1-(5-phospho-D-ribosyl)imidazole-4-carboxamide from 5-amino-1-(5-phospho-D-ribosyl)imidazole-4-carboxylate: step 1/2. The chain is Phosphoribosylaminoimidazole-succinocarboxamide synthase A (purC1) from Bradyrhizobium diazoefficiens (strain JCM 10833 / BCRC 13528 / IAM 13628 / NBRC 14792 / USDA 110).